A 310-amino-acid polypeptide reads, in one-letter code: tRNA dimethylallyltransferase (310 aa).

Residue 14–21 participates in ATP binding; sequence GPTASGKS. 16-21 is a binding site for substrate; the sequence is TASGKS. 2 interaction with substrate tRNA regions span residues 39-42 and 163-167; these read DSMQ and QRIVR.

The protein belongs to the IPP transferase family. As to quaternary structure, monomer. It depends on Mg(2+) as a cofactor.

The catalysed reaction is adenosine(37) in tRNA + dimethylallyl diphosphate = N(6)-dimethylallyladenosine(37) in tRNA + diphosphate. Catalyzes the transfer of a dimethylallyl group onto the adenine at position 37 in tRNAs that read codons beginning with uridine, leading to the formation of N6-(dimethylallyl)adenosine (i(6)A). This is tRNA dimethylallyltransferase from Brucella suis biovar 1 (strain 1330).